A 1279-amino-acid chain; its full sequence is ATP-dependent helicase/nuclease subunit A (1279 aa).

The UvrD-like helicase ATP-binding domain occupies 4 to 499 (TKWTDEQRQA…VKLFKNFRSR (496 aa)). 25 to 32 (AGAGAGKT) is a binding site for ATP. Residues 526–853 (EEALKVGASY…RIMSIHKSKG (328 aa)) form the UvrD-like helicase C-terminal domain.

Belongs to the helicase family. AddA subfamily. In terms of assembly, heterodimer of AddA and AddB/RexB. Mg(2+) is required as a cofactor.

It catalyses the reaction Couples ATP hydrolysis with the unwinding of duplex DNA by translocating in the 3'-5' direction.. The enzyme catalyses ATP + H2O = ADP + phosphate + H(+). Functionally, the heterodimer acts as both an ATP-dependent DNA helicase and an ATP-dependent, dual-direction single-stranded exonuclease. Recognizes the chi site generating a DNA molecule suitable for the initiation of homologous recombination. The AddA nuclease domain is required for chi fragment generation; this subunit has the helicase and 3' -&gt; 5' nuclease activities. In Clostridium botulinum (strain 657 / Type Ba4), this protein is ATP-dependent helicase/nuclease subunit A.